The following is a 404-amino-acid chain: Phosphopentomutase (404 aa).

The Mn(2+) site is built by aspartate 10, aspartate 303, histidine 308, aspartate 344, histidine 345, and histidine 356.

It belongs to the phosphopentomutase family. The cofactor is Mn(2+).

The protein resides in the cytoplasm. The catalysed reaction is 2-deoxy-alpha-D-ribose 1-phosphate = 2-deoxy-D-ribose 5-phosphate. It carries out the reaction alpha-D-ribose 1-phosphate = D-ribose 5-phosphate. It participates in carbohydrate degradation; 2-deoxy-D-ribose 1-phosphate degradation; D-glyceraldehyde 3-phosphate and acetaldehyde from 2-deoxy-alpha-D-ribose 1-phosphate: step 1/2. In terms of biological role, isomerase that catalyzes the conversion of deoxy-ribose 1-phosphate (dRib-1-P) and ribose 1-phosphate (Rib-1-P) to deoxy-ribose 5-phosphate (dRib-5-P) and ribose 5-phosphate (Rib-5-P), respectively. The polypeptide is Phosphopentomutase (Shewanella sp. (strain W3-18-1)).